A 303-amino-acid chain; its full sequence is Coenzyme PQQ synthesis protein B (303 aa).

This sequence belongs to the PqqB family.

Its pathway is cofactor biosynthesis; pyrroloquinoline quinone biosynthesis. Its function is as follows. May be involved in the transport of PQQ or its precursor to the periplasm. This is Coenzyme PQQ synthesis protein B from Pseudomonas putida (strain W619).